Reading from the N-terminus, the 236-residue chain is Ribose-5-phosphate isomerase A (236 aa).

Substrate-binding positions include 28-31, 83-86, and 96-99; these read TGST, DGAD, and KGGG. The active-site Proton acceptor is the E105. K123 contacts substrate.

It belongs to the ribose 5-phosphate isomerase family. In terms of assembly, homodimer.

The catalysed reaction is aldehydo-D-ribose 5-phosphate = D-ribulose 5-phosphate. Its pathway is carbohydrate degradation; pentose phosphate pathway; D-ribose 5-phosphate from D-ribulose 5-phosphate (non-oxidative stage): step 1/1. Catalyzes the reversible conversion of ribose-5-phosphate to ribulose 5-phosphate. The chain is Ribose-5-phosphate isomerase A from Afipia carboxidovorans (strain ATCC 49405 / DSM 1227 / KCTC 32145 / OM5) (Oligotropha carboxidovorans).